Consider the following 864-residue polypeptide: Mitochondrial 15S rRNA processing factor CCM1 (864 aa).

A mitochondrion-targeting transit peptide spans 1–76 (MYMARCGPKN…REFSNTLKER (76 aa)). PPR repeat units lie at residues 319 to 353 (NKQN…STKH) and 356 to 390 (DICT…NIKP).

This sequence belongs to the CCM1 family. As to quaternary structure, binds to mitochondrial small subunit 15S rRNA.

Its subcellular location is the mitochondrion. Regulates mitochondrial small subunit maturation by controlling 15S rRNA 5'-end processing. Localizes to the 5' precursor of the 15S rRNA in a position that is subsequently occupied by mS47 in the mature yeast mtSSU. Uses structure and sequence-specific RNA recognition, binding to a single-stranded region of the precursor and specifically recognizing bases -6 to -1. The exchange of Ccm1 for mS47 is coupled to the irreversible removal of precursor rRNA that is accompanied by conformational changes of the mitoribosomal proteins uS5m and mS26. These conformational changes signal completion of 5'-end rRNA processing through protection of the mature 5'-end of the 15S rRNA and stabilization of mS47. The removal of the 5' precursor together with the dissociation of Ccm1 may be catalyzed by the 5'-3' exoribonuclease Pet127. Involved in the specific removal of group I introns in mitochondrial encoded transcripts. This Saccharomyces cerevisiae (strain JAY291) (Baker's yeast) protein is Mitochondrial 15S rRNA processing factor CCM1 (CCM1).